A 149-amino-acid polypeptide reads, in one-letter code: Natriuretic peptides A (149 aa).

The first 23 residues, 1-23, serve as a signal peptide directing secretion; sequence MGSPIAASFLLFLAVQLLGQTGA. 2 propeptides span residues 24 to 121 and 91 to 101; these read NPVY…AAPR and DGGALGRSPWD. The tract at residues 49-103 is disordered; sequence MPLEDEAESPQALSEQNAEAGAALSPLPEVPPWTGEVSPAQRDGGALGRSPWDSS. Serine 127 bears the Phosphoserine mark. Cysteine 128 and cysteine 144 are disulfide-bonded. An important for degradation of atrial natriuretic peptide by IDE region spans residues 145-149; that stretch reads NSFRY.

The protein belongs to the natriuretic peptide family. As to quaternary structure, homodimer; disulfide-linked antiparallel dimer. In terms of processing, the precursor molecule is proteolytically cleaved by CORIN at Arg-121 to produce the atrial natriuretic peptide. Undergoes further proteolytic cleavage by unknown proteases to give rise to long-acting natriuretic peptide, vessel dilator and kaliuretic peptide. Additional processing gives rise to the auriculin and atriopeptin peptides. In the kidneys, alternative processing by an unknown protease results in the peptide urodilatin. Cleavage by MME initiates degradation of the factor and thereby regulates its activity. Degradation by IDE results in reduced activation of NPR1 (in vitro). During IDE degradation, the resulting products can temporarily stimulate NPR2 to produce cGMP, before the fragments are completely degraded and inactivated by IDE (in vitro). Post-translationally, degraded by IDE. In terms of processing, phosphorylation on Ser-127 decreases vasorelaxant activity.

Its subcellular location is the secreted. The protein resides in the perikaryon. It is found in the cell projection. Hormone that plays a key role in mediating cardio-renal homeostasis, and is involved in vascular remodeling and regulating energy metabolism. Acts by specifically binding and stimulating NPR1 to produce cGMP, which in turn activates effector proteins, such as PRKG1, that drive various biological responses. Regulates vasodilation, natriuresis, diuresis and aldosterone synthesis and is therefore essential for regulating blood pressure, controlling the extracellular fluid volume and maintaining the fluid-electrolyte balance. Also involved in inhibiting cardiac remodeling and cardiac hypertrophy by inducing cardiomyocyte apoptosis and attenuating the growth of cardiomyocytes and fibroblasts. Plays a role in female pregnancy by promoting trophoblast invasion and spiral artery remodeling in uterus, and thus prevents pregnancy-induced hypertension. In adipose tissue, acts in various cGMP- and PKG-dependent pathways to regulate lipid metabolism and energy homeostasis. This includes up-regulating lipid metabolism and mitochondrial oxygen utilization by activating the AMP-activated protein kinase (AMPK), and increasing energy expenditure by acting via MAPK11 to promote the UCP1-dependent thermogenesis of brown adipose tissue. Binds the clearance receptor NPR3 which removes the hormone from circulation. In terms of biological role, may have a role in cardio-renal homeostasis through regulation of natriuresis, diuresis, vasodilation, and inhibiting aldosterone synthesis. In vitro, promotes the production of cGMP and induces vasodilation. May promote natriuresis, at least in part, by enhancing prostaglandin E2 synthesis resulting in the inhibition of renal Na+-K+-ATPase. However reports on the involvement of this peptide in mammal blood volume and blood pressure homeostasis are conflicting; according to a report, in vivo it is not sufficient to activate cGMP and does not inhibit collecting duct transport nor effect diuresis and natriuresis. Appears to bind to specific receptors that are distinct from the receptors bound by atrial natriuretic peptide and vessel dilator. Possibly enhances protein excretion in urine by decreasing proximal tubular protein reabsorption. Functionally, may have a role in cardio-renal homeostasis through regulation of natriuresis, diuresis, and vasodilation. In vitro, promotes the production of cGMP and induces vasodilation. May promote natriuresis, at least in part, by enhancing prostaglandin E2 synthesis resulting in the inhibition of renal Na+-K+-ATPase. However reports on the involvement of this peptide in mammal blood volume and blood pressure homeostasis are conflicting; according to a report it is not sufficient to activate cGMP and does not inhibit collecting duct transport nor effect diuresis and natriuresis. Appears to bind to specific receptors that are distinct from the receptors bound by the atrial natriuretic and long-acting natriuretic peptides. Possibly functions in protein excretion in urine by maintaining the integrity of the proximal tubules and enhancing protein excretion by decreasing proximal tubular protein reabsorption. Its function is as follows. May have a role in cardio-renal homeostasis through regulation of diuresis and inhibiting aldosterone synthesis. In vitro, promotes the production of cGMP and induces vasodilation. May promote natriuresis, at least in part, by enhancing prostaglandin E2 synthesis resulting in the inhibition of renal Na+-K+-ATPase. May have a role in potassium excretion but not sodium excretion (natriuresis). Possibly enhances protein excretion in urine by decreasing proximal tubular protein reabsorption. Hormone produced in the kidneys that appears to be important for maintaining cardio-renal homeostasis. Mediates vasodilation, natriuresis and diuresis primarily in the renal system, in order to maintain the extracellular fluid volume and control the fluid-electrolyte balance. Specifically binds and stimulates cGMP production by renal transmembrane receptors, likely NPR1. Urodilatin not ANP, may be the natriuretic peptide responsible for the regulation of sodium and water homeostasis in the kidney. In terms of biological role, may have a role in cardio-renal homeostasis through regulation of natriuresis and vasodilation. In vivo promotes natriuresis and in vitro, vasodilates renal artery strips. Functionally, may have a role in cardio-renal homeostasis through regulation of regulation of natriuresis and vasodilation. In vivo promotes natriuresis. In vitro, vasodilates intestinal smooth muscle but not smooth muscle strips. Its function is as follows. May have a role in cardio-renal homeostasis through regulation of natriuresis and vasodilation. In vivo promotes natriuresis. In vitro, selectively vasodilates intestinal and vascular smooth muscle strips. May have a role in cardio-renal homeostasis through regulation of natriuresis and vasodilation. In vivo promotes natriuresis. In vitro, selectively vasodilates intestinal smooth muscle but not vascular smooth muscle strips. The protein is Natriuretic peptides A (NPPA) of Canis lupus familiaris (Dog).